A 423-amino-acid chain; its full sequence is AP-1 complex subunit mu-1 (423 aa).

S2 is subject to N-acetylserine. Residues T152, T154, and T223 each carry the phosphothreonine modification. The region spanning 168–421 (KNEVFLDVIE…ITQNGDYQLR (254 aa)) is the MHD domain.

It belongs to the adaptor complexes medium subunit family. As to quaternary structure, adaptor protein complex 1 (AP-1) is a heterotetramer composed of two large adaptins (gamma-type subunit AP1G1 and beta-type subunit AP1B1), a medium adaptin (mu-type subunit AP1M1 or AP1M2) and a small adaptin (sigma-type subunit AP1S1 or AP1S2 or AP1S3). Interacts with MARCHF11. In terms of processing, phosphorylation of membrane-bound AP1M1/AP1M2 increases its affinity for sorting signals.

The protein resides in the cytoplasmic vesicle. Its subcellular location is the clathrin-coated vesicle membrane. It is found in the golgi apparatus. In terms of biological role, subunit of clathrin-associated adaptor protein complex 1 that plays a role in protein sorting in the trans-Golgi network (TGN) and endosomes. The AP complexes mediate the recruitment of clathrin to membranes and the recognition of sorting signals within the cytosolic tails of transmembrane cargo molecules. The sequence is that of AP-1 complex subunit mu-1 from Bos taurus (Bovine).